Consider the following 447-residue polypeptide: Glycylpeptide N-tetradecanoyltransferase (447 aa).

Residues Tyr38 to Trp41, Leu171 to Val173, and Ser179 to Ala183 contribute to the tetradecanoyl-CoA site. Leu447 (proton acceptor; via carboxylate) is an active-site residue.

Belongs to the NMT family. In terms of assembly, monomer.

Its subcellular location is the cytoplasm. It carries out the reaction N-terminal glycyl-[protein] + tetradecanoyl-CoA = N-tetradecanoylglycyl-[protein] + CoA + H(+). Functionally, adds a myristoyl group to the N-terminal glycine residue of certain cellular proteins. This chain is Glycylpeptide N-tetradecanoyltransferase (NMT1), found in Kluyveromyces lactis (strain ATCC 8585 / CBS 2359 / DSM 70799 / NBRC 1267 / NRRL Y-1140 / WM37) (Yeast).